A 134-amino-acid chain; its full sequence is MIYMLDTNIIIYLMKNRPKIIAERVSQLLPNDRLVMSFITYAELIKGAFGSQNYEQSIRAIELLTERVNVLYPNEQICLHYGKWANTLKKQGRPIGNNDLWFACHALSLNAVLITHNVKEFQRITDLQWQDWTK.

Positions Tyr-3–Trp-132 constitute a PINc domain. Positions 6 and 99 each coordinate Mg(2+).

The protein belongs to the PINc/VapC protein family. Requires Mg(2+) as cofactor.

Functionally, toxic component of a type II toxin-antitoxin (TA) system. Acts as an RNase, its toxic effect is neutralized by VapB1 antitoxin. The chain is Ribonuclease VapC1 from Haemophilus influenzae (strain ATCC 51907 / DSM 11121 / KW20 / Rd).